A 255-amino-acid chain; its full sequence is Taurine import ATP-binding protein TauB (255 aa).

Residues 2 to 229 (LQISHLYADY…RFVAGESSRS (228 aa)) form the ABC transporter domain. ATP is bound at residue 34–41 (GPSGCGKT).

This sequence belongs to the ABC transporter superfamily. Taurine importer (TC 3.A.1.17.1) family. As to quaternary structure, the complex is composed of two ATP-binding proteins (TauB), two transmembrane proteins (TauC) and a solute-binding protein (TauA).

It is found in the cell inner membrane. The enzyme catalyses taurine(out) + ATP + H2O = taurine(in) + ADP + phosphate + H(+). Functionally, part of the ABC transporter complex TauABC involved in taurine import. Responsible for energy coupling to the transport system. In Shigella flexneri serotype 5b (strain 8401), this protein is Taurine import ATP-binding protein TauB.